A 79-amino-acid chain; its full sequence is Acyl carrier protein (79 aa).

The Carrier domain occupies 2 to 77 (SEIGERVKKI…DATKFLEKNA (76 aa)). S37 is subject to O-(pantetheine 4'-phosphoryl)serine.

This sequence belongs to the acyl carrier protein (ACP) family. In terms of processing, 4'-phosphopantetheine is transferred from CoA to a specific serine of apo-ACP by AcpS. This modification is essential for activity because fatty acids are bound in thioester linkage to the sulfhydryl of the prosthetic group.

The protein resides in the cytoplasm. It functions in the pathway lipid metabolism; fatty acid biosynthesis. Functionally, carrier of the growing fatty acid chain in fatty acid biosynthesis. The sequence is that of Acyl carrier protein from Nitrobacter hamburgensis (strain DSM 10229 / NCIMB 13809 / X14).